Here is a 309-residue protein sequence, read N- to C-terminus: Haloalkane dehalogenase (309 aa).

An AB hydrolase-1 domain is found at 37–148; it reads PTVLFLHGNP…FERWEDFHQR (112 aa). Aspartate 110 serves as the catalytic Nucleophile. Glutamate 134 serves as the catalytic Proton donor. Residue histidine 278 is the Proton acceptor of the active site.

The protein belongs to the haloalkane dehalogenase family. Type 2 subfamily. Monomer.

The enzyme catalyses 1-haloalkane + H2O = a halide anion + a primary alcohol + H(+). In terms of biological role, catalyzes hydrolytic cleavage of carbon-halogen bonds in halogenated aliphatic compounds, leading to the formation of the corresponding primary alcohols, halide ions and protons. This Mesorhizobium japonicum (strain LMG 29417 / CECT 9101 / MAFF 303099) (Mesorhizobium loti (strain MAFF 303099)) protein is Haloalkane dehalogenase.